The chain runs to 131 residues: Replicase polyprotein 1ab (131 aa).

The 128-residue stretch at 1-128 (ITEFSWNKYL…KLLNFGNHFI (128 aa)) folds into the Nidovirus-type SAM-dependent 2'-O-MTase domain.

In terms of biological role, the replicase polyprotein of coronaviruses is a multifunctional protein: it contains the activities necessary for the transcription of negative stranded RNA, leader RNA, subgenomic mRNAs and progeny virion RNA as well as proteinases responsible for the cleavage of the polyprotein into functional products. This is Replicase polyprotein 1ab (rep) from Sus scrofa (Pig).